A 292-amino-acid chain; its full sequence is ATP synthase gamma chain (292 aa).

This sequence belongs to the ATPase gamma chain family. F-type ATPases have 2 components, CF(1) - the catalytic core - and CF(0) - the membrane proton channel. CF(1) has five subunits: alpha(3), beta(3), gamma(1), delta(1), epsilon(1). CF(0) has three main subunits: a, b and c.

It is found in the cell inner membrane. Its function is as follows. Produces ATP from ADP in the presence of a proton gradient across the membrane. The gamma chain is believed to be important in regulating ATPase activity and the flow of protons through the CF(0) complex. This Hydrogenobaculum sp. (strain Y04AAS1) protein is ATP synthase gamma chain.